A 350-amino-acid chain; its full sequence is Phenylalanine--tRNA ligase alpha subunit (350 aa).

Glu-271 is a Mg(2+) binding site.

The protein belongs to the class-II aminoacyl-tRNA synthetase family. Phe-tRNA synthetase alpha subunit type 1 subfamily. In terms of assembly, tetramer of two alpha and two beta subunits. The cofactor is Mg(2+).

It is found in the cytoplasm. The enzyme catalyses tRNA(Phe) + L-phenylalanine + ATP = L-phenylalanyl-tRNA(Phe) + AMP + diphosphate + H(+). In Delftia acidovorans (strain DSM 14801 / SPH-1), this protein is Phenylalanine--tRNA ligase alpha subunit.